A 628-amino-acid chain; its full sequence is Probable potassium transport system protein Kup (628 aa).

Transmembrane regions (helical) follow at residues 15-35 (FAAE…SPLY), 49-69 (FLGG…ILSV), 106-126 (WYLL…GVLT), 141-161 (ISPE…LAVF), 174-194 (FFGP…VYGI), 210-230 (IMLM…CFLA), 254-274 (LFVA…ILLV), 295-315 (LLFL…TGVF), 343-363 (IYVG…VLGF), 369-389 (LASA…ILFI), 398-418 (WPAP…FAFA), and 425-445 (IHDG…VMVS).

This sequence belongs to the HAK/KUP transporter (TC 2.A.72) family.

It is found in the cell inner membrane. It catalyses the reaction K(+)(in) + H(+)(in) = K(+)(out) + H(+)(out). Its function is as follows. Transport of potassium into the cell. Likely operates as a K(+):H(+) symporter. The chain is Probable potassium transport system protein Kup from Xanthobacter autotrophicus (strain ATCC BAA-1158 / Py2).